The following is a 617-amino-acid chain: E3 ubiquitin-protein ligase ORTHRUS 1 (617 aa).

The segment at 12–62 (DGVCMRCQVNPPSEETLTCGTCVTPWHVPCLLPESLASSTGEWECPDCSGV) adopts a PHD-type zinc-finger fold. An RING-type 1 zinc finger spans residues 129-169 (CSICIQLPERPITTPCGHNFCLKCFEKWAVGQGKLTCMICR). A YDG domain is found at 258 to 407 (TRKQGVLVGE…FKVCRYLFVR (150 aa)). The segment at 495 to 552 (CQICREVLSLPVTTPCAHNFCKACLEAKFAGITQLRERSNGGRKLRAKKNIMTCPCCT) adopts an RING-type 2 zinc-finger fold. Positions 563 to 593 (QVNREMMEIIENFKKSEEEADASISEEEEEE) form a coiled coil. The tract at residues 575 to 617 (FKKSEEEADASISEEEEEESEPPTKKIKMDNNSVGGSGTSLSA) is disordered. Positions 580–595 (EEADASISEEEEEESE) are enriched in acidic residues. A compositionally biased stretch (polar residues) spans 604–617 (DNNSVGGSGTSLSA).

Expressed in inflorescences and leaves.

The protein localises to the nucleus. The catalysed reaction is S-ubiquitinyl-[E2 ubiquitin-conjugating enzyme]-L-cysteine + [acceptor protein]-L-lysine = [E2 ubiquitin-conjugating enzyme]-L-cysteine + N(6)-ubiquitinyl-[acceptor protein]-L-lysine.. It functions in the pathway protein modification; protein ubiquitination. Functionally, E3 ubiquitin-protein ligase. Participates in CpG methylation-dependent transcriptional regulation and epigenetic transcriptional silencing. Mediates ubiquitination with the E2 ubiquitin-conjugating enzymes UBC11, UBC8 and UBC8 homologs (e.g. UBC10, UBC11, UBC28 and UBC29) but not with UBC27, UBC30, UBC32, UBC34 and UBC36. Promotes methylation-mediated gene silencing leading, for example, to early flowering. Can bind to CpG, CpNpG, and CpNpN DNA motifs, with a strong preference for methylated forms, and with highest affinity for CpG substrate. In Arabidopsis thaliana (Mouse-ear cress), this protein is E3 ubiquitin-protein ligase ORTHRUS 1 (ORTH1).